Reading from the N-terminus, the 568-residue chain is Peptidoglycan D,D-transpeptidase FtsI (568 aa).

A helical membrane pass occupies residues 19 to 39 (FVTLCSIVFLFLVILTLRIIF). The active-site Acyl-ester intermediate is the Ser302.

It belongs to the transpeptidase family. FtsI subfamily.

It localises to the cell inner membrane. It carries out the reaction Preferential cleavage: (Ac)2-L-Lys-D-Ala-|-D-Ala. Also transpeptidation of peptidyl-alanyl moieties that are N-acyl substituents of D-alanine.. The protein operates within cell wall biogenesis; peptidoglycan biosynthesis. Catalyzes cross-linking of the peptidoglycan cell wall at the division septum. This chain is Peptidoglycan D,D-transpeptidase FtsI, found in Buchnera aphidicola subsp. Schizaphis graminum (strain Sg).